Here is a 353-residue protein sequence, read N- to C-terminus: Putative transport protein aq_740 (353 aa).

The next 8 helical transmembrane spans lie at 4–24 (LSLF…LYLL), 28–48 (FNPI…YGFI), 60–80 (FLVI…FAVI), 156–176 (VYTA…LFFI), 209–229 (VLAV…MGFI), 240–260 (LIWA…AAFV), 268–288 (LFTT…TFLI), and 309–329 (VALF…GVFL).

Belongs to the autoinducer-2 exporter (AI-2E) (TC 2.A.86) family.

Its subcellular location is the cell membrane. This chain is Putative transport protein aq_740, found in Aquifex aeolicus (strain VF5).